A 319-amino-acid chain; its full sequence is Transaldolase (319 aa).

The Schiff-base intermediate with substrate role is filled by Lys126.

Belongs to the transaldolase family. Type 1 subfamily. Homodimer.

It is found in the cytoplasm. The catalysed reaction is D-sedoheptulose 7-phosphate + D-glyceraldehyde 3-phosphate = D-erythrose 4-phosphate + beta-D-fructose 6-phosphate. The protein operates within carbohydrate degradation; pentose phosphate pathway; D-glyceraldehyde 3-phosphate and beta-D-fructose 6-phosphate from D-ribose 5-phosphate and D-xylulose 5-phosphate (non-oxidative stage): step 2/3. Its function is as follows. Transaldolase is important for the balance of metabolites in the pentose-phosphate pathway. The chain is Transaldolase from Bordetella avium (strain 197N).